Here is a 145-residue protein sequence, read N- to C-terminus: Globin-1 (145 aa).

In terms of domain architecture, Globin spans 1–145 (GISADQAKAL…VIVPGMKAGY (145 aa)). The heme b site is built by H63 and H92.

This sequence belongs to the globin family. As to quaternary structure, monomer.

This Liolophura japonica (Chiton) protein is Globin-1.